Reading from the N-terminus, the 290-residue chain is Pirin (290 aa).

Fe cation-binding residues include His-56, His-58, His-101, and Glu-103.

The protein belongs to the pirin family. In terms of assembly, may interact with NF1/CTF1. Interacts with BCL3. Identified in a complex comprised of PIR, BLC3, NFKB1 and target DNA. The cofactor is Fe cation. Highly expressed in a subset of melanomas. Detected at very low levels in most tissues (at protein level). Expressed in all tissues, with highest level of expression in heart and liver.

Its subcellular location is the nucleus. It is found in the cytoplasm. It catalyses the reaction quercetin + O2 = 2-(3,4-dihydroxybenzoyloxy)-4,6-dihydroxybenzoate + CO. It participates in flavonoid metabolism; quercetin degradation. With respect to regulation, inhibited by kojic acid, sodium diethyldithiocarbamate and 1,10-phenanthroline monohydrochloride. Its function is as follows. Transcriptional coregulator of NF-kappa-B which facilitates binding of NF-kappa-B proteins to target kappa-B genes in a redox-state-dependent manner. May be required for efficient terminal myeloid maturation of hematopoietic cells. Has quercetin 2,3-dioxygenase activity (in vitro). In Homo sapiens (Human), this protein is Pirin (PIR).